We begin with the raw amino-acid sequence, 277 residues long: Serine protease 33 (277 aa).

Positions 1-24 (MRGASHLQILLLLVLGTRMQECAA) are cleaved as a signal peptide. Residues 34-276 (IVGGRDAQDG…YSPWIQARLS (243 aa)) enclose the Peptidase S1 domain. An intrachain disulfide couples C59 to C75. Catalysis depends on charge relay system residues H74 and D123. 3 disulfides stabilise this stretch: C157–C234, C190–C213, and C224–C252. S228 functions as the Charge relay system in the catalytic mechanism.

This sequence belongs to the peptidase S1 family. In terms of processing, not glycosylated. In terms of tissue distribution, widely expressed.

It localises to the secreted. In terms of biological role, serine protease that has amidolytic activity, cleaving its substrates before Arg residues. The protein is Serine protease 33 (Prss33) of Mus musculus (Mouse).